We begin with the raw amino-acid sequence, 78 residues long: Defensin-like protein (78 aa).

The signal sequence occupies residues methionine 1–alanine 31. 4 cysteine pairs are disulfide-bonded: cysteine 34–cysteine 78, cysteine 45–cysteine 65, cysteine 51–cysteine 72, and cysteine 55–cysteine 74.

The protein belongs to the DEFL family. In terms of tissue distribution, predominantly expressed in the pistil during all stages of flower development.

It localises to the secreted. In terms of biological role, may be involved in the defense of the pistil against pathogen infection. This chain is Defensin-like protein, found in Petunia integrifolia (Violet-flowered petunia).